The primary structure comprises 413 residues: Gamma-glutamyl phosphate reductase (413 aa).

The protein belongs to the gamma-glutamyl phosphate reductase family.

The protein resides in the cytoplasm. The enzyme catalyses L-glutamate 5-semialdehyde + phosphate + NADP(+) = L-glutamyl 5-phosphate + NADPH + H(+). The protein operates within amino-acid biosynthesis; L-proline biosynthesis; L-glutamate 5-semialdehyde from L-glutamate: step 2/2. Catalyzes the NADPH-dependent reduction of L-glutamate 5-phosphate into L-glutamate 5-semialdehyde and phosphate. The product spontaneously undergoes cyclization to form 1-pyrroline-5-carboxylate. The sequence is that of Gamma-glutamyl phosphate reductase from Geobacillus sp. (strain WCH70).